The sequence spans 307 residues: Elongation factor Ts (307 aa).

The involved in Mg(2+) ion dislocation from EF-Tu stretch occupies residues 80–83; that stretch reads TDFV.

Belongs to the EF-Ts family.

It is found in the cytoplasm. Functionally, associates with the EF-Tu.GDP complex and induces the exchange of GDP to GTP. It remains bound to the aminoacyl-tRNA.EF-Tu.GTP complex up to the GTP hydrolysis stage on the ribosome. The polypeptide is Elongation factor Ts (Clostridium botulinum (strain 657 / Type Ba4)).